The primary structure comprises 91 residues: Uteroglobin (91 aa).

A signal peptide spans 1-21; that stretch reads MKLAITLALVTLALLCSPASA.

The protein belongs to the secretoglobin family. In terms of assembly, antiparallel homodimer; disulfide-linked. Interaction with LMBR1L is controversial. In terms of tissue distribution, synthesized in the uterus and lung.

It is found in the secreted. Uteroglobin binds progesterone specifically and with high affinity. It may regulate progesterone concentrations reaching the blastocyst. It is also a potent inhibitor of phospholipase A2. The chain is Uteroglobin (SCGB1A1) from Oryctolagus cuniculus (Rabbit).